The following is a 190-amino-acid chain: MSTKNRDRLVVTEDSDDDNEHEEMSSGDNSGEEGPSYGDAAARDPDETVAFPAPQRKKKKVIKKLTRKEQSLKHSVKEYRIKLAMVKPDITTDREKERNLRRIATKGVVQLFNAVSDRQKTMSDAVKEKMTARDRKEARERFDGKNFDSDKFADSGYGYGGKNEVKGEEEDEQMNIGDDEIDAGNYSDED.

Residues 1 to 11 show a composition bias toward basic and acidic residues; that stretch reads MSTKNRDRLVV. 2 disordered regions span residues 1 to 69 and 119 to 190; these read MSTK…TRKE and QKTM…SDED. Residues 55–66 show a composition bias toward basic residues; the sequence is QRKKKKVIKKLT. A coiled-coil region spans residues 59–84; it reads KKVIKKLTRKEQSLKHSVKEYRIKLA. The span at 119–153 shows a compositional bias: basic and acidic residues; it reads QKTMSDAVKEKMTARDRKEARERFDGKNFDSDKFA. Residues 167–190 show a composition bias toward acidic residues; it reads GEEEDEQMNIGDDEIDAGNYSDED.

Belongs to the RRP15 family.

The protein is RRP15-like protein of Caenorhabditis briggsae.